We begin with the raw amino-acid sequence, 138 residues long: MAGLPEKEKLLRNFNRCANWEEKYLYIIELGQRLAPLDDAERTPAHRIQGCQSQVWIVMNPGENGVIEMRGDSDAAIVKGLIAVVFALYQQMTAQDIVNFDVRPWFEEMSLTQHLTPSRSQGLEAMIRAIRAKAADLS.

The Cysteine persulfide intermediate role is filled by cysteine 51.

This sequence belongs to the SufE family. In terms of assembly, homodimer. Interacts with SufS.

It localises to the cytoplasm. It functions in the pathway cofactor biosynthesis; iron-sulfur cluster biosynthesis. In terms of biological role, participates in cysteine desulfuration mediated by SufS. Cysteine desulfuration mobilizes sulfur from L-cysteine to yield L-alanine and constitutes an essential step in sulfur metabolism for biosynthesis of a variety of sulfur-containing biomolecules. Functions as a sulfur acceptor for SufS, by mediating the direct transfer of the sulfur atom from the S-sulfanylcysteine of SufS, an intermediate product of cysteine desulfuration process. The sequence is that of Cysteine desulfuration protein SufE from Cronobacter sakazakii (strain ATCC BAA-894) (Enterobacter sakazakii).